A 399-amino-acid chain; its full sequence is Inositol polyphosphate 1-phosphatase (399 aa).

Asp54 provides a ligand contact to Li(+). Glu79 lines the Mg(2+) pocket. Glu80 serves as a coordination point for Li(+). Positions 153 and 155 each coordinate Mg(2+). 1D-myo-inositol 1,4-bisphosphate-binding residues include Asp156, Ser157, Thr158, Ser267, Lys269, Gly289, Ala290, Lys293, and Thr311. Mg(2+) is bound at residue Asp316. Ser317 bears the Phosphoserine mark.

Belongs to the inositol monophosphatase superfamily. In terms of assembly, monomer. Requires Mg(2+) as cofactor. As to expression, ubiquitously expressed, with highest levels in pancreas and kidney.

It catalyses the reaction 1D-myo-inositol 1,4-bisphosphate + H2O = 1D-myo-inositol 4-phosphate + phosphate. It carries out the reaction 1D-myo-inositol 1,3,4-trisphosphate + H2O = 1D-myo-inositol 3,4-bisphosphate + phosphate. Its pathway is signal transduction; phosphatidylinositol signaling pathway. With respect to regulation, inhibited by Li(+). Its function is as follows. Mg(2+)-dependent phosphatase that catalyzes the hydrolysis of the 1-position phosphate from inositol 1,4-bisphosphate and inositol 1,3,4-trisphosphate and participates in inositol phosphate metabolism. This Homo sapiens (Human) protein is Inositol polyphosphate 1-phosphatase.